We begin with the raw amino-acid sequence, 1363 residues long: DNA-directed RNA polymerase subunit beta' (1363 aa).

Residues 1–39 (MTSTPSKSRKSSKGSKAAKAAASAPETRPLAKTPPPFRN) form a disordered region. The span at 14-24 (GSKAAKAAASA) shows a compositional bias: low complexity. Residues C248, C315, C322, and C325 each contribute to the Zn(2+) site.

This sequence belongs to the RNA polymerase beta' chain family. RpoC2 subfamily. In cyanobacteria the RNAP catalytic core is composed of 2 alpha, 1 beta, 1 beta', 1 gamma and 1 omega subunit. When a sigma factor is associated with the core the holoenzyme is formed, which can initiate transcription. Requires Zn(2+) as cofactor.

It catalyses the reaction RNA(n) + a ribonucleoside 5'-triphosphate = RNA(n+1) + diphosphate. DNA-dependent RNA polymerase catalyzes the transcription of DNA into RNA using the four ribonucleoside triphosphates as substrates. In Synechococcus sp. (strain WH7803), this protein is DNA-directed RNA polymerase subunit beta'.